Here is a 124-residue protein sequence, read N- to C-terminus: Small ribosomal subunit protein uS12 (124 aa).

Residue Asp89 is modified to 3-methylthioaspartic acid. The tract at residues 102 to 124 is disordered; the sequence is LDTSGVNNRKHGRSKYGTKRPKS. The segment covering 109–124 has biased composition (basic residues); that stretch reads NRKHGRSKYGTKRPKS.

It belongs to the universal ribosomal protein uS12 family. As to quaternary structure, part of the 30S ribosomal subunit. Contacts proteins S8 and S17. May interact with IF1 in the 30S initiation complex.

With S4 and S5 plays an important role in translational accuracy. Its function is as follows. Interacts with and stabilizes bases of the 16S rRNA that are involved in tRNA selection in the A site and with the mRNA backbone. Located at the interface of the 30S and 50S subunits, it traverses the body of the 30S subunit contacting proteins on the other side and probably holding the rRNA structure together. The combined cluster of proteins S8, S12 and S17 appears to hold together the shoulder and platform of the 30S subunit. The chain is Small ribosomal subunit protein uS12 from Francisella tularensis subsp. tularensis (strain FSC 198).